We begin with the raw amino-acid sequence, 196 residues long: ATP-dependent Clp protease proteolytic subunit (196 aa).

Ser-98 acts as the Nucleophile in catalysis. Residue His-123 is part of the active site.

This sequence belongs to the peptidase S14 family. Fourteen ClpP subunits assemble into 2 heptameric rings which stack back to back to give a disk-like structure with a central cavity, resembling the structure of eukaryotic proteasomes.

It localises to the cytoplasm. It carries out the reaction Hydrolysis of proteins to small peptides in the presence of ATP and magnesium. alpha-casein is the usual test substrate. In the absence of ATP, only oligopeptides shorter than five residues are hydrolyzed (such as succinyl-Leu-Tyr-|-NHMec, and Leu-Tyr-Leu-|-Tyr-Trp, in which cleavage of the -Tyr-|-Leu- and -Tyr-|-Trp bonds also occurs).. Functionally, cleaves peptides in various proteins in a process that requires ATP hydrolysis. Has a chymotrypsin-like activity. Plays a major role in the degradation of misfolded proteins. In Geobacillus sp. (strain WCH70), this protein is ATP-dependent Clp protease proteolytic subunit.